A 1224-amino-acid chain; its full sequence is Dynactin subunit 1 (1224 aa).

Residues 1–10 show a composition bias toward basic residues; the sequence is MAQSRRHPHG. The segment at 1-30 is disordered; that stretch reads MAQSRRHPHGRASSAGPRMSTEASSKPLKV. The CAP-Gly domain maps to 49–91; the sequence is GATLXATGKWVGVILDEAKGKNDGTVQGRKYFTCEENHGIFVR. Disordered stretches follow at residues 100–217, 374–402, and 888–918; these read DGAD…RSQV, SASE…RQQR, and PHCH…PPAE. The segment covering 117–146 has biased composition (basic residues); it reads VPKRHSRXAAKGSKLRGAKPKKTTARRPKP. Residues 148–180 show a composition bias toward low complexity; it reads RTPTSAPSSGTAGPSGSASASGGEMSSSEPSTP. Residues 205-540 are a coiled coil; that stretch reads SPTKEEENLR…QEASAEKQQQ (336 aa). The span at 207 to 217 shows a compositional bias: basic and acidic residues; it reads TKEEENLRSQV. Coiled coils occupy residues 936–1042 and 1081–1117; these read LKLE…EGLR and KDSP…LELA. The disordered stretch occupies residues 1203-1224; that stretch reads WCSSSRARASPPASACSPPRPS. The span at 1204 to 1224 shows a compositional bias: low complexity; the sequence is CSSSRARASPPASACSPPRPS.

This sequence belongs to the dynactin 150 kDa subunit family. In terms of assembly, monomer and homodimer. Subunit of dynactin, a multiprotein complex part of a tripartite complex with dynein and a adapter, such as BICDL1, BICD2 or HOOK3. The dynactin complex is built around ACTR1A/ACTB filament and consists of an actin-related filament composed of a shoulder domain, a pointed end and a barbed end. Its length is defined by its flexible shoulder domain. The soulder is composed of 2 DCTN1 subunits, 4 DCTN2 and 2 DCTN3. DCTN1/p150(glued) binds directly to microtubules and to cytoplasmic dynein. Ubiquitously expressed.

The protein localises to the cytoplasm. It is found in the cytoskeleton. It localises to the microtubule organizing center. The protein resides in the centrosome. Its subcellular location is the centriole. The protein localises to the spindle. It is found in the cell cortex. Functionally, part of the dynactin complex that activates the molecular motor dynein for ultra-processive transport along microtubules. Plays a key role in dynein-mediated retrograde transport of vesicles and organelles along microtubules by recruiting and tethering dynein to microtubules. Binds to both dynein and microtubules providing a link between specific cargos, microtubules and dynein. Essential for targeting dynein to microtubule plus ends, recruiting dynein to membranous cargos and enhancing dynein processivity (the ability to move along a microtubule for a long distance without falling off the track). Can also act as a brake to slow the dynein motor during motility along the microtubule. Can regulate microtubule stability by promoting microtubule formation, nucleation and polymerization and by inhibiting microtubule catastrophe in neurons. Inhibits microtubule catastrophe by binding both to microtubules and to tubulin, leading to enhanced microtubule stability along the axon. Plays a role in metaphase spindle orientation. Plays a role in centriole cohesion and subdistal appendage organization and function. Its recruitment to the centriole in a KIF3A-dependent manner is essential for the maintenance of centriole cohesion and the formation of subdistal appendage. Also required for microtubule anchoring at the mother centriole. Plays a role in primary cilia formation. This is Dynactin subunit 1 (DCTN1) from Gallus gallus (Chicken).